Reading from the N-terminus, the 180-residue chain is Translation initiation factor IF-3 (180 aa).

This sequence belongs to the IF-3 family. Monomer.

Its subcellular location is the cytoplasm. Its function is as follows. IF-3 binds to the 30S ribosomal subunit and shifts the equilibrium between 70S ribosomes and their 50S and 30S subunits in favor of the free subunits, thus enhancing the availability of 30S subunits on which protein synthesis initiation begins. The protein is Translation initiation factor IF-3 of Salmonella typhimurium (strain LT2 / SGSC1412 / ATCC 700720).